A 249-amino-acid polypeptide reads, in one-letter code: Mannose-binding protein C (249 aa).

An N-terminal signal peptide occupies residues 1–20; that stretch reads MSLFTSLPFLLLTAVTASCA. In terms of domain architecture, Collagen-like spans 43 to 101; sequence GINGIPGKDGRDGAKGEKGEPGQGLRGSQGPPGKMGPQGTPGIPGIPGPIGQKGDPGEN. A disordered region spans residues 43–103; that stretch reads GINGIPGKDG…QKGDPGENMG (61 aa). P48 is subject to 4-hydroxyproline. Residues 50 to 62 show a composition bias toward basic and acidic residues; it reads KDGRDGAKGEKGE. A 4-hydroxyproline mark is found at P63, P74, P83, and P86. Residues 79 to 95 show a composition bias toward low complexity; that stretch reads PQGTPGIPGIPGPIGQK. Residues 113–131 adopt a coiled-coil conformation; sequence RATLQSELNQIKNWLIFSL. One can recognise a C-type lectin domain in the interval 135 to 246; sequence VGKKAFFTNG…CSASFLTVCE (112 aa). 2 disulfide bridges follow: C156/C245 and C223/C237.

As to quaternary structure, oligomeric complex of 3 or more homotrimers. Interacts with MASP1 and MASP2. Interacts with MEP1A and MEP1B and may inhibit their catalytic activity. Hydroxylation on proline residues within the sequence motif, GXPG, is most likely to be 4-hydroxy as this fits the requirement for 4-hydroxylation in vertebrates.

The protein resides in the secreted. In terms of biological role, calcium-dependent lectin involved in innate immune defense. Binds mannose, fucose and N-acetylglucosamine on different microorganisms and activates the lectin complement pathway. Binds to late apoptotic cells, as well as to apoptotic blebs and to necrotic cells, but not to early apoptotic cells, facilitating their uptake by macrophages. The chain is Mannose-binding protein C (MBL) from Bos taurus (Bovine).